The primary structure comprises 460 residues: 4-O-methyl-glucuronoyl methylesterase (460 aa).

The signal sequence occupies residues 1 to 17 (MASRFFALLLLAIPIQA). Residue Q18 is modified to Pyrrolidone carboxylic acid. Positions 18–53 (QSPVWGQCGGIGWSGPTTCVGGATCVSYNPYYSQCI) constitute a CBM1 domain. 3 cysteine pairs are disulfide-bonded: C96/C131, C277/C412, and C309/C384. The GXSYXG catalytic site motif motif lies at 276–281 (GCSRNG). S278 functions as the Nucleophile in the catalytic mechanism. 4 residues coordinate substrate: K282, Q324, E332, and W375. The Proton donor/acceptor role is filled by H411. N447 carries N-linked (GlcNAc...) asparagine glycosylation.

Belongs to the carbohydrate esterase 15 (CE15) family.

It is found in the secreted. It catalyses the reaction a 4-O-methyl-alpha-D-glucuronosyl ester derivative + H2O = 4-O-methyl-alpha-D-glucuronate derivative + an alcohol + H(+). Functionally, glucuronoyl esterase which may play a significant role in biomass degradation, as it is considered to disconnect hemicellulose from lignin through the hydrolysis of the ester bond between 4-O-methyl-D-glucuronic acid residues of glucuronoxylans and aromatic alcohols of lignin. Does not hydrolyze substrates of other carbohydrate esterases such as acetylxylan esterase, acetyl esterase and feruloyl esterase. In Hypocrea jecorina (strain QM6a) (Trichoderma reesei), this protein is 4-O-methyl-glucuronoyl methylesterase.